Consider the following 688-residue polypeptide: Sialic acid-binding Ig-like lectin 10 (688 aa).

An N-terminal signal peptide occupies residues 1 to 17; that stretch reads MSLLLFLLSFLLDGPQG. At 18 to 543 the chain is on the extracellular side; it reads QMESYFLQVQ…DKDSATAFSK (526 aa). One can recognise an Ig-like V-type domain in the interval 26–138; it reads VQRIVKAQEG…SFKEEFRLQV (113 aa). Disulfide bonds link Cys37/Cys172, Cys42/Cys102, and Cys163/Cys214. Arg120 provides a ligand contact to N-acetylneuraminate. One can recognise an Ig-like C2-type 1 domain in the interval 145 to 228; it reads PDIFIPEVLE…SRMSTQRTVR (84 aa). 2 N-linked (GlcNAc...) asparagine glycosylation sites follow: Asn195 and Asn246. 2 consecutive Ig-like C2-type domains span residues 250–334 and 339–436; these read PDLH…LDLS and PQDL…LSLS. Intrachain disulfides connect Cys271/Cys318 and Cys375/Cys420. A helical transmembrane segment spans residues 544–564; the sequence is GAVLGFGITALLALCLIVVIV. Residues 565–688 are Cytoplasmic-facing; sequence KTLQKKGTQE…YSDYTEVRVH (124 aa). The short motif at 588 to 593 is the ITIM motif 1 element; sequence LDYINV. Residues 602-656 form a disordered region; the sequence is RNWKAEPDAPSRSSPLDTHFPKPKKKQKDPHFTYPGCPDPTSSSQVPVSENNPEE. A compositionally biased stretch (polar residues) spans 641-652; it reads PTSSSQVPVSEN. Residues 657-662 carry the ITIM motif 2 motif; sequence LHYAAL. Phosphotyrosine is present on Tyr659.

This sequence belongs to the immunoglobulin superfamily. SIGLEC (sialic acid binding Ig-like lectin) family. As to quaternary structure, interacts with PTPN6/SHP-1 upon phosphorylation. Interacts with NCF1. Interacts with CD24; the probable CD24:SIGLEC10 complex is proposed to inhibit HGMB1-mediated tissue damage immune response. Interacts with HMGB1; the interaction is dependent on CD24. Associates with membrane IgM on the B cell surface. Interacts with RIGI, CBL and PTPN11. Post-translationally, phosphorylation of Tyr-659 is involved in binding to PTPN6. As to expression, expressed in B cells with high levels in pre-B cells and B1a cells of the peritoneal cavity.

The protein resides in the cell membrane. Its function is as follows. Putative adhesion molecule that mediates sialic-acid dependent binding to cells. Preferentially binds to alpha-2,3- or alpha-2,6-linked sialic acid. The sialic acid recognition site may be masked by cis interactions with sialic acids on the same cell surface. In the immune response, seems to act as an inhibitory receptor upon ligand induced tyrosine phosphorylation by recruiting cytoplasmic phosphatase(s) via their SH2 domain(s) that block signal transduction through dephosphorylation of signaling molecules. Involved in negative regulation of B-cell antigen receptor signaling and specifically acts on B1 cells to inhibit Ca(2+) signaling, cellular expansion and antibody secretion. The inhibition of B cell activation is dependent on PTPN6/SHP-1. In association with CD24 may be involved in the selective suppression of the immune response to danger-associated molecular patterns (DAMPs) such as HMGB1, HSP70 and HSP90. In association with CD24 may regulate the immune repsonse of natural killer (NK) cells. Plays a role in the control of autoimmunity. During initiation of adaptive immune responses by CD8-alpha(+) dendritic cells inhibits cross-presentation by impairing the formation of MHC class I-peptide complexes. The function seems to implicate recruitment of PTPN6/SHP-1, which dephosphorylates NCF1 of the NADPH oxidase complex consequently promoting phagosomal acidification. Functionally, (Microbial infection) During infection by RNA viruses inhibits RIG-I signaling in macrophages by promoting its CBL-dependent ubiquitination and degradation via PTPN11/SHP-2. In Mus musculus (Mouse), this protein is Sialic acid-binding Ig-like lectin 10 (Siglec10).